A 318-amino-acid polypeptide reads, in one-letter code: Probable metal transport system membrane protein CT_070 (318 aa).

The next 10 membrane-spanning stretches (helical) occupy residues 1–21 (MVAS…LVFF), 39–59 (IQVI…TFLV), 64–84 (AMYA…VCLF), 94–114 (QALT…IHFI), 124–144 (ASTA…LVFL), 170–190 (IFLV…SFVC), 196–216 (IFAF…MLLL), 226–246 (AVGV…AKLI), 252–272 (EMMV…PALS), and 285–305 (TSGL…VFVC).

Belongs to the ABC-3 integral membrane protein family.

It localises to the cell inner membrane. Part of an ATP-driven transport system CT_067/CT_068/CT_069/CT_070 for a metal. The chain is Probable metal transport system membrane protein CT_070 from Chlamydia trachomatis serovar D (strain ATCC VR-885 / DSM 19411 / UW-3/Cx).